We begin with the raw amino-acid sequence, 291 residues long: Isopentenyl-diphosphate Delta-isomerase I, chloroplastic (291 aa).

The N-terminal 52 residues, 1 to 52 (MSTASLFSFPSFHLRSLLPSLSSSSSSSSSRFAPPRLSPIRSPAPRTQLSVR), are a transit peptide targeting the chloroplast. Serine 2 carries the post-translational modification N-acetylthreonine. Positions 20-39 (SLSSSSSSSSSRFAPPRLSP) are enriched in low complexity. The disordered stretch occupies residues 20-43 (SLSSSSSSSSSRFAPPRLSPIRSP). Substrate is bound at residue lysine 95. 2 residues coordinate Mg(2+): histidine 99 and histidine 111. Positions 109 to 261 (LLHRAFSVFL…AVKLSPWFRL (153 aa)) constitute a Nudix hydrolase domain. The substrate site is built by arginine 130 and lysine 134. The active site involves cysteine 146. Serine 147 lines the substrate pocket. Positions 147–177 (SHPLYRESELIEENVLGVRNAAQRKLFDELG) match the Nudix box motif. The Mg(2+) site is built by glutamate 206 and glutamate 208. The active site involves glutamate 208.

This sequence belongs to the IPP isomerase type 1 family. Requires Mg(2+) as cofactor.

It is found in the plastid. The protein resides in the chloroplast. It localises to the cytoplasm. The catalysed reaction is isopentenyl diphosphate = dimethylallyl diphosphate. It participates in isoprenoid biosynthesis; dimethylallyl diphosphate biosynthesis; dimethylallyl diphosphate from isopentenyl diphosphate: step 1/1. The protein operates within porphyrin-containing compound metabolism; chlorophyll biosynthesis. Functionally, catalyzes the 1,3-allylic rearrangement of the homoallylic substrate isopentenyl (IPP) to its highly electrophilic allylic isomer, dimethylallyl diphosphate (DMAPP). The protein is Isopentenyl-diphosphate Delta-isomerase I, chloroplastic (IPP1) of Arabidopsis thaliana (Mouse-ear cress).